Reading from the N-terminus, the 127-residue chain is MFNTLLAVFIGGGVGSMARWLVSLKLNSASAHLPVGTLIVNLVGAFIIGLTLALFSRMTHIDPVWKLLITTGFCGGLTTFSTFSVEVVYLIQEGKLTWAAGTILLNVAGSLAMTMLAFILVNNFASQ.

4 consecutive transmembrane segments (helical) span residues 4–24 (TLLAVFIGGGVGSMARWLVSL), 35–55 (VGTLIVNLVGAFIIGLTLALF), 71–91 (TGFCGGLTTFSTFSVEVVYLI), and 101–121 (GTILLNVAGSLAMTMLAFILV). Gly75 and Thr78 together coordinate Na(+).

The protein belongs to the fluoride channel Fluc/FEX (TC 1.A.43) family.

The protein localises to the cell inner membrane. The enzyme catalyses fluoride(in) = fluoride(out). Its activity is regulated as follows. Na(+) is not transported, but it plays an essential structural role and its presence is essential for fluoride channel function. Its function is as follows. Fluoride-specific ion channel. Important for reducing fluoride concentration in the cell, thus reducing its toxicity. The chain is Fluoride-specific ion channel FluC 1 from Yersinia pseudotuberculosis serotype I (strain IP32953).